Here is a 132-residue protein sequence, read N- to C-terminus: Small ribosomal subunit protein uS13 (132 aa).

Basic residues predominate over residues 101–125 (RGLPVRGQRTKTNARTRKGPRKTVA). Residues 101–132 (RGLPVRGQRTKTNARTRKGPRKTVANKKIETR) form a disordered region.

The protein belongs to the universal ribosomal protein uS13 family. As to quaternary structure, part of the 30S ribosomal subunit. Forms a loose heterodimer with protein S19. Forms two bridges to the 50S subunit in the 70S ribosome.

Its function is as follows. Located at the top of the head of the 30S subunit, it contacts several helices of the 16S rRNA. In the 70S ribosome it contacts the 23S rRNA (bridge B1a) and protein L5 of the 50S subunit (bridge B1b), connecting the 2 subunits; these bridges are implicated in subunit movement. Contacts the tRNAs in the A and P-sites. The chain is Small ribosomal subunit protein uS13 from Ureaplasma urealyticum serovar 10 (strain ATCC 33699 / Western).